Consider the following 120-residue polypeptide: MGLEKQTLRMGNGKDHPQPGDPVELNYTGYLYDESNPDHHKGKEFDSSKRRGPLKATIGAGDVIRGWDEGVRQMSLGEKAILTMSGEYAYGEKGFPGLIPPNASLVFEVELLKIKDHGLD.

The disordered stretch occupies residues 1–26 (MGLEKQTLRMGNGKDHPQPGDPVELN). Residues 20–115 (GDPVELNYTG…VFEVELLKIK (96 aa)) enclose the PPIase FKBP-type domain.

It belongs to the FKBP-type PPIase family. FKBP1 subfamily.

The catalysed reaction is [protein]-peptidylproline (omega=180) = [protein]-peptidylproline (omega=0). Its activity is regulated as follows. Inhibited by both FK506 and rapamycin. PPIases accelerate the folding of proteins. It catalyzes the cis-trans isomerization of proline imidic peptide bonds in oligopeptides. The chain is FK506-binding protein 1B (fpr1B) from Aspergillus fumigatus (strain ATCC MYA-4609 / CBS 101355 / FGSC A1100 / Af293) (Neosartorya fumigata).